The chain runs to 687 residues: Adhesion G-protein coupled receptor G1 (687 aa).

An N-terminal signal peptide occupies residues 1-25 (MTAQSLLQTTLFLLSLLFLVQGAHG). 26–33 (RGHREDFR) serves as a coordination point for heparin. The Extracellular portion of the chain corresponds to 26–402 (RGHREDFRFC…VEVDAVHKHY (377 aa)). 2 disulfide bridges follow: Cys35–Cys91 and Cys121–Cys177. N-linked (GlcNAc...) asparagine glycosylation is found at Asn39, Asn148, and Asn171. 190-200 (LKHPQKASRRP) serves as a coordination point for heparin. The GAIN-B domain maps to 224–395 (DTVSFEEDRI…AVLMVSSVEV (172 aa)). N-linked (GlcNAc...) asparagine glycosylation is found at Asn234, Asn303, Asn324, and Asn341. 2 disulfides stabilise this stretch: Cys346–Cys377 and Cys366–Cys379. The segment at 346–395 (CVFWVEDPTLSSPGHWSSAGCETVRRETQTSCFCNHLTYFAVLMVSSVEV) is GPS. The stachel stretch occupies residues 384 to 397 (YFAVLMVSSVEVDA). Residues 403–423 (LSLLSYVGCVVSALACIVTIA) traverse the membrane as a helical segment. Over 424-442 (AYLCSRRKPRDYTIKVHMN) the chain is Cytoplasmic. The helical transmembrane segment at 443 to 463 (LLLAVFLLDTSFLLSEPVALT) threads the bilayer. At 464-470 (GSEAGCR) the chain is on the extracellular side. A helical transmembrane segment spans residues 471–491 (ASAIFLHFSLLACLSWMGLEG). Over 492–512 (YNLYRLVVEVFGTYVPGYLLK) the chain is Cytoplasmic. A helical transmembrane segment spans residues 513-533 (LSAMGWGFPIFLVTLVALVDV). Over 534–570 (DNYGPIILAVHRTPEGVIYPSMCWIRDSLVSYITNLG) the chain is Extracellular. The chain crosses the membrane as a helical span at residues 571–591 (LFSLVFLFNMAMLATMVVQIL). The Cytoplasmic portion of the chain corresponds to 592–603 (RLRPHTQKWSHV). The helical transmembrane segment at 604–624 (LTLLGLSLVLGLPWALIFFSF) threads the bilayer. Topologically, residues 625–630 (ASGTFQ) are extracellular. Residues 631-651 (LVVLYLFSIITSFQGFLIFIW) traverse the membrane as a helical segment. The Cytoplasmic portion of the chain corresponds to 652-687 (YWSMRLQARGGPSPLKSNSDSARLPISSGSTSSSRI). Residues 664-687 (SPLKSNSDSARLPISSGSTSSSRI) are disordered. A compositionally biased stretch (low complexity) spans 678-687 (SSGSTSSSRI).

Belongs to the G-protein coupled receptor 2 family. LN-TM7 subfamily. Heterodimer of 2 chains generated by proteolytic processing; the large extracellular N-terminal fragment (ADGRG1 NT) and the membrane-bound C-terminal fragment (ADGRG1-CT) predominantly remain associated and non-covalently linked. ADGRG1 NT self-associates in a trans-trans manner; the homophilic interaction enhances receptor signaling. Interacts with TGM2. Interacts with heparin; leading to the reduction of ADGRG1 shedding. Interacts with COL3A1. Part of a GPCR-tetraspanin complex at least consisting of ADGRG1, CD81, eventually CD9, and GNA11 in which CD81 is enhancing the association of ADGRG1 with GNA11. In terms of processing, autoproteolytically cleaved into 2 fragments; the large extracellular N-terminal fragment (ADGRG1 NT) and the membrane-bound C-terminal fragment (ADGRG1 CT) predominantly remain associated and non-covalently linked. Shedding to yield the secreted ADGRG1 N-terminal fragment seems to involve metalloprotease(s). Post-translationally, ubiquitinated. Undergoes polyubiquitination upon activation.

Its subcellular location is the cell membrane. It is found in the secreted. The protein localises to the membrane raft. Forms a heterodimer of 2 chains generated by proteolytic processing that remain associated through non-covalent interactions mediated by the GAIN-B domain. In the inactivated receptor, the Stachel sequence (also named stalk) is embedded in the GAIN-B domain, where it adopts a beta-strand conformation. On activation, the Stachel moves into the 7 transmembrane region and adopts a twisted hook-shaped configuration that forms contacts within the receptor, leading to coupling of a G-alpha protein, which activates signaling. The cleaved GAIN-B and N-terminal domains can then dissociate from the rest of the receptor. Functionally, adhesion G-protein coupled receptor (aGPCR) for steroid hormone 17alpha-hydroxypregnenolone (17-OH), which is involved in cell adhesion and cell-cell interactions. Ligand binding causes a conformation change that triggers signaling via guanine nucleotide-binding proteins (G proteins) and modulates the activity of downstream effectors, such as RhoA pathway. ADGRG1 is coupled to G(12) and/or G(13) G proteins (GNA12 and GNA13, respectively) and mediates the activation Rho small GTPases. Acts as a potent suppressor of ferroptosis: binding to 17-OH-binding initiates signaling that down-regulates CD36 and alleviates ferroptosis-induced liver injury. Ligand-binding also induces cell adhesion activity via association with proteins such as collagen III/COL3A1 and TGM2. Mediates cell matrix adhesion in developing neurons and hematopoietic stem cells. Involved in cortical development, specifically in maintenance of the pial basement membrane integrity and in cortical lamination: association with COL3A1 in the developing brain inhibits neuronal migration via activation of the RhoA pathway. Together with TGM2, acts as a regulator of myelination and myelin repair in oligodendrocyte precursor cells. Acts as a hemostatic sensor of shear force: G protein-coupled receptor signaling is activated in response to shear force in platelets, promoting G(13) G protein signaling, and platelet shape change and aggregation in a COL3A1-dependent manner. Acts as an inhibitor of VEGFA production thereby inhibiting angiogenesis through a signaling pathway mediated by PRKCA. Plays a role in the maintenance of hematopoietic stem cells in bone marrow niche. Plays an essential role in testis development. The polypeptide is Adhesion G-protein coupled receptor G1 (ADGRG1) (Gorilla gorilla gorilla (Western lowland gorilla)).